The sequence spans 343 residues: uncharacterized protein (343 aa).

Residue 33–40 (GPKSSGKS) coordinates ATP.

The protein belongs to the archaeal ATPase family.

This is an uncharacterized protein from Methanocaldococcus jannaschii (strain ATCC 43067 / DSM 2661 / JAL-1 / JCM 10045 / NBRC 100440) (Methanococcus jannaschii).